A 489-amino-acid polypeptide reads, in one-letter code: Retinoblastoma-binding protein 5 homolog (489 aa).

6 WD repeats span residues 22-63, 64-103, 147-187, 195-234, 248-290, and 292-330; these read DCIS…KIIS, AHVH…LEHK, DSDG…VVAS, SSAT…TLGK, VNKT…KILH, and TKGE…NWSA. Positions 451–489 are disordered; that stretch reads DVSLPDAPTDETHPLISSKASKDKQQPVGGKKAAGRTKK.

As to quaternary structure, core component of several methyltransferase-containing complexes. Component of the SET1 complex, composed at least of the catalytic subunit Set1, wds/WDR5, Wdr82, Rbbp5, ash2, Cfp1/CXXC1, hcf and Dpy-30L1. Component of the MLL3/4 complex composed at least of the catalytic subunit trr, ash2, Rbbp5, Dpy-30L1, wds, hcf, ptip, Pa1, Utx, Lpt and Ncoa6.

It localises to the nucleus. In terms of biological role, component of the SET1 complex that specifically di- and trimethylates 'Lys-4' of histone H3 and of the MLL3/4 complex which also methylates histone H3 'Lys-4'. The polypeptide is Retinoblastoma-binding protein 5 homolog (Drosophila melanogaster (Fruit fly)).